Consider the following 129-residue polypeptide: Cuticle protein 12.5 (129 aa).

Repeat copies occupy residues 7 to 10, 15 to 18, 23 to 26, 28 to 31, 37 to 40, 67 to 70, 79 to 82, 91 to 94, 103 to 106, and 117 to 120.

Its function is as follows. Component of the cuticle of migratory locust which contains more than 100 different structural proteins. This is Cuticle protein 12.5 from Locusta migratoria (Migratory locust).